The sequence spans 415 residues: tRNA(Ile2) 2-agmatinylcytidine synthetase TiaS (415 aa).

This sequence belongs to the TiaS family.

It localises to the cytoplasm. It catalyses the reaction cytidine(34) in tRNA(Ile2) + agmatine + ATP + H2O = 2-agmatinylcytidine(34) in tRNA(Ile2) + AMP + 2 phosphate + 2 H(+). Functionally, ATP-dependent agmatine transferase that catalyzes the formation of 2-agmatinylcytidine (agm2C) at the wobble position (C34) of tRNA(Ile2), converting the codon specificity from AUG to AUA. This chain is tRNA(Ile2) 2-agmatinylcytidine synthetase TiaS, found in Methanocorpusculum labreanum (strain ATCC 43576 / DSM 4855 / Z).